Reading from the N-terminus, the 271-residue chain is NH(3)-dependent NAD(+) synthetase (271 aa).

43–50 provides a ligand contact to ATP; it reads GISGGQDS. Position 49 (Asp-49) interacts with Mg(2+). Residue Arg-137 coordinates deamido-NAD(+). Residue Thr-157 participates in ATP binding. Glu-162 contacts Mg(2+). Lys-170 and Asp-177 together coordinate deamido-NAD(+). 2 residues coordinate ATP: Lys-186 and Thr-208. 257-258 is a binding site for deamido-NAD(+); the sequence is HK.

Belongs to the NAD synthetase family. As to quaternary structure, homodimer.

The enzyme catalyses deamido-NAD(+) + NH4(+) + ATP = AMP + diphosphate + NAD(+) + H(+). The protein operates within cofactor biosynthesis; NAD(+) biosynthesis; NAD(+) from deamido-NAD(+) (ammonia route): step 1/1. Its function is as follows. Catalyzes the ATP-dependent amidation of deamido-NAD to form NAD. Uses ammonia as a nitrogen source. This Exiguobacterium sibiricum (strain DSM 17290 / CCUG 55495 / CIP 109462 / JCM 13490 / 255-15) protein is NH(3)-dependent NAD(+) synthetase.